A 317-amino-acid chain; its full sequence is Zinc finger protein CRM3 (317 aa).

A compositionally biased stretch (low complexity) spans 1-15; sequence MNFSLSKQSSEKQSS. The tract at residues 1 to 22 is disordered; sequence MNFSLSKQSSEKQSSYTDKSRS. C2H2-type zinc fingers lie at residues 254–276 and 282–306; these read KQCP…YLIH and FKCT…LKSH.

The protein resides in the nucleus. Probable transcription factor involved in the regulation of the transcription of genes involved in cell rescue and defense, as well as cell cycle and DNA processing. This chain is Zinc finger protein CRM3, found in Saccharomyces cerevisiae (strain ATCC 204508 / S288c) (Baker's yeast).